Here is a 630-residue protein sequence, read N- to C-terminus: DNA topoisomerase 4 subunit B (630 aa).

Residues Y5, N42, D69, 110-116 (GLHGVGI), and K334 each bind ATP. The region spanning 412-525 (TELFLVEGDS…NGHVYVALPP (114 aa)) is the Toprim domain. E418, D490, and D492 together coordinate Mg(2+).

It belongs to the type II topoisomerase family. ParE type 1 subfamily. In terms of assembly, heterotetramer composed of ParC and ParE. Requires Mg(2+) as cofactor. The cofactor is Mn(2+). Ca(2+) is required as a cofactor.

It catalyses the reaction ATP-dependent breakage, passage and rejoining of double-stranded DNA.. Functionally, topoisomerase IV is essential for chromosome segregation. It relaxes supercoiled DNA. Performs the decatenation events required during the replication of a circular DNA molecule. This is DNA topoisomerase 4 subunit B from Salmonella typhi.